Consider the following 179-residue polypeptide: MQRQTGHMEDKKRTGLESQGTENAFSDGRDGKDGLLHEGINEPILIPSTIADLEGIRELVRKFRGRLLPFEKCPDFCLRIGGLEASFHKGQEELLEYCEALYLPQPVKMEIVGIVDDVPCLATGMQLLILVAEGGEVYAYEEDTLHKLATSFSEFLEIGVKSLGREVYHCGEYIEQVVH.

Basic and acidic residues predominate over residues 1-15 (MQRQTGHMEDKKRTG). Residues 1-32 (MQRQTGHMEDKKRTGLESQGTENAFSDGRDGK) form a disordered region.

This is an uncharacterized protein from Gallus gallus (Chicken).